The following is a 172-amino-acid chain: SsrA-binding protein (172 aa).

This sequence belongs to the SmpB family.

The protein resides in the cytoplasm. In terms of biological role, required for rescue of stalled ribosomes mediated by trans-translation. Binds to transfer-messenger RNA (tmRNA), required for stable association of tmRNA with ribosomes. tmRNA and SmpB together mimic tRNA shape, replacing the anticodon stem-loop with SmpB. tmRNA is encoded by the ssrA gene; the 2 termini fold to resemble tRNA(Ala) and it encodes a 'tag peptide', a short internal open reading frame. During trans-translation Ala-aminoacylated tmRNA acts like a tRNA, entering the A-site of stalled ribosomes, displacing the stalled mRNA. The ribosome then switches to translate the ORF on the tmRNA; the nascent peptide is terminated with the 'tag peptide' encoded by the tmRNA and targeted for degradation. The ribosome is freed to recommence translation, which seems to be the essential function of trans-translation. This Dehalococcoides mccartyi (strain CBDB1) protein is SsrA-binding protein.